The following is a 246-amino-acid chain: Chalcone--flavanone isomerase 1 (246 aa).

Substrate-binding residues include Thr59, Asn124, and Ser201.

Belongs to the chalcone isomerase family. In terms of tissue distribution, mostly expressed in siliques and flowers, and, to a lower extent, in leaves.

It carries out the reaction a chalcone = a flavanone.. It functions in the pathway secondary metabolite biosynthesis; flavonoid biosynthesis. Functionally, catalyzes the intramolecular cyclization of bicyclic chalcones into tricyclic (S)-flavanones. Responsible for the isomerization of 4,2',4',6'-tetrahydroxychalcone (also termed chalcone) into naringenin. The polypeptide is Chalcone--flavanone isomerase 1 (CHI1) (Arabidopsis thaliana (Mouse-ear cress)).